Consider the following 193-residue polypeptide: Thymidine kinase (193 aa).

Residues 9 to 16 (STMNAGKS) and 87 to 90 (DEAN) each bind ATP. Residue glutamate 88 is the Proton acceptor of the active site. 4 residues coordinate Zn(2+): cysteine 145, cysteine 147, cysteine 182, and histidine 185.

This sequence belongs to the thymidine kinase family. As to quaternary structure, homotetramer.

It localises to the cytoplasm. It carries out the reaction thymidine + ATP = dTMP + ADP + H(+). This is Thymidine kinase from Agrobacterium fabrum (strain C58 / ATCC 33970) (Agrobacterium tumefaciens (strain C58)).